The sequence spans 717 residues: DNA ligase (717 aa).

Residues 44–48, 93–94, and glutamate 127 each bind NAD(+); these read DAEYD and SL. Residue lysine 129 is the N6-AMP-lysine intermediate of the active site. 4 residues coordinate NAD(+): arginine 150, glutamate 186, lysine 302, and lysine 326. Zn(2+) contacts are provided by cysteine 431, cysteine 434, cysteine 455, and cysteine 461. The BRCT domain maps to 639–717; the sequence is TSGSPVVGKT…EDEWLELIGG (79 aa).

It belongs to the NAD-dependent DNA ligase family. LigA subfamily. Mg(2+) serves as cofactor. The cofactor is Mn(2+).

It carries out the reaction NAD(+) + (deoxyribonucleotide)n-3'-hydroxyl + 5'-phospho-(deoxyribonucleotide)m = (deoxyribonucleotide)n+m + AMP + beta-nicotinamide D-nucleotide.. Its function is as follows. DNA ligase that catalyzes the formation of phosphodiester linkages between 5'-phosphoryl and 3'-hydroxyl groups in double-stranded DNA using NAD as a coenzyme and as the energy source for the reaction. It is essential for DNA replication and repair of damaged DNA. This chain is DNA ligase, found in Rhizobium rhizogenes (strain K84 / ATCC BAA-868) (Agrobacterium radiobacter).